We begin with the raw amino-acid sequence, 603 residues long: Geraniol synthase Tps-5031G8, chloroplastic (603 aa).

Residues 1–35 (MCSISQKVVIGLNKAAANNCLQNLDRRGFKTRRVS) constitute a chloroplast transit peptide. Arg-319, Asp-356, Asp-360, Arg-497, and Asp-500 together coordinate (2E)-geranyl diphosphate. Mg(2+) contacts are provided by Asp-356 and Asp-360. The short motif at 356 to 360 (DDVYD) is the DDXXD motif element. Residues Asp-500, Thr-504, and Glu-508 each contribute to the Mg(2+) site.

Belongs to the terpene synthase family. Tpsb subfamily. As to quaternary structure, monomer. Mg(2+) is required as a cofactor. Requires Mn(2+) as cofactor.

The protein localises to the plastid. It localises to the chloroplast. The enzyme catalyses (2E)-geranyl diphosphate + H2O = (2E)-geraniol + diphosphate. Its pathway is secondary metabolite biosynthesis; terpenoid biosynthesis. Monoterpene synthase (mono-TPS) involved in the biosynthesis of monoterpenes natural products. Catalyzes the conversion of (2E)-geranyl diphosphate (GPP) into geraniol. This Perilla frutescens var. hirtella (Perilla citriodora) protein is Geraniol synthase Tps-5031G8, chloroplastic.